The following is a 569-amino-acid chain: Phosphoglucomutase 2 (569 aa).

The segment at 1–23 is disordered; it reads MSFQIETVPTKPYEDQKPGTSGL. S2 carries the N-acetylserine modification. Alpha-D-glucose 1,6-bisphosphate is bound at residue R24. T111 and T117 each carry phosphothreonine. Position 119 (S119) interacts with alpha-D-glucose 1,6-bisphosphate. Residue S119 is the Phosphoserine intermediate of the active site. 4 residues coordinate Mg(2+): S119, D290, D292, and D294. Phosphoserine is present on S119. Alpha-D-glucose 1,6-bisphosphate contacts are provided by D294, R295, T359, E378, S380, and K391.

Belongs to the phosphohexose mutase family. In terms of assembly, monomer. Mg(2+) serves as cofactor. Zn(2+) is required as a cofactor. In terms of processing, O-glycosylated with mannose residues. Substrate of UDP-glucose--glycoprotein glucose phosphotransferase, linking glucose in a phosphodiester linkage to O-linked mannose.

It is found in the cytoplasm. It carries out the reaction alpha-D-glucose 1-phosphate = alpha-D-glucose 6-phosphate. The enzyme catalyses O-phospho-L-seryl-[protein] + alpha-D-glucose 1-phosphate = alpha-D-glucose 1,6-bisphosphate + L-seryl-[protein]. The catalysed reaction is alpha-D-glucose 1,6-bisphosphate + L-seryl-[protein] = O-phospho-L-seryl-[protein] + alpha-D-glucose 6-phosphate. Its function is as follows. Major phosphoglucomutase isozyme that catalyzes the reversible isomerization of alpha-D-glucose 1-phosphate to alpha-D-glucose 6-phosphate. The mechanism proceeds via the intermediate compound alpha-D-glucose 1,6-bisphosphate. Constitutes about 80-90% of the phosphoglucomutase activity in the cell. Key enzyme in hexose metabolism. The forward reaction is an essential step in the energy metabolism of galactose since the product of the galactose pathway enzymes in yeast is glucose 1-phosphate. The reverse reaction is an essential step for biosynthesis when carbon sources other than galactose are the energy source because glucose 1-phosphate is the starting point for the synthesis of UDP-glucose, which acts as a precursor for the synthesis of oligosaccharides and trehalose. This Saccharomyces cerevisiae (strain ATCC 204508 / S288c) (Baker's yeast) protein is Phosphoglucomutase 2.